The primary structure comprises 753 residues: Polyribonucleotide nucleotidyltransferase (753 aa).

Residues D488 and D494 each contribute to the Mg(2+) site. Residues 555–614 form the KH domain; the sequence is PRLLRTKISPDKIGALIGPGGKNIRGIQETTGAVIEVDDEGTVLVASSNKESAQEAMRQV. Residues 624-692 form the S1 motif domain; it reads GKIYDGTVSS…EHDRVKLSRR (69 aa). A compositionally biased stretch (acidic residues) spans 698–719; sequence LGEEDPLAVEGEGGGDSEGGGD. Residues 698-753 are disordered; that stretch reads LGEEDPLAVEGEGGGDSEGGGDGEDRPRRRRGGSGGGGGGGRGRGPRRSGGGRDRD. A compositionally biased stretch (gly residues) spans 730–740; the sequence is GSGGGGGGGRG.

This sequence belongs to the polyribonucleotide nucleotidyltransferase family. Requires Mg(2+) as cofactor.

It is found in the cytoplasm. It catalyses the reaction RNA(n+1) + phosphate = RNA(n) + a ribonucleoside 5'-diphosphate. Its function is as follows. Involved in mRNA degradation. Catalyzes the phosphorolysis of single-stranded polyribonucleotides processively in the 3'- to 5'-direction. The chain is Polyribonucleotide nucleotidyltransferase from Rhodopirellula baltica (strain DSM 10527 / NCIMB 13988 / SH1).